The following is a 415-amino-acid chain: Probable glucuronosyltransferase Os01g0926600 (415 aa).

The Cytoplasmic portion of the chain corresponds to 1-4; that stretch reads MAMR. A helical; Signal-anchor for type II membrane protein transmembrane segment spans residues 5–25; the sequence is LSSAAVALALLLAATALEDVA. Over 26–415 the chain is Lumenal; that stretch reads RGQDTERIEG…QGPVGDLKPW (390 aa). 2 N-linked (GlcNAc...) asparagine glycosylation sites follow: asparagine 142 and asparagine 403.

Belongs to the glycosyltransferase 47 family.

The protein localises to the golgi apparatus membrane. Involved in the synthesis of glucuronoxylan hemicellulose in secondary cell walls. The sequence is that of Probable glucuronosyltransferase Os01g0926600 from Oryza sativa subsp. japonica (Rice).